The following is a 221-amino-acid chain: Probable septum site-determining protein MinC (221 aa).

Belongs to the MinC family. In terms of assembly, interacts with MinD and FtsZ.

Functionally, cell division inhibitor that blocks the formation of polar Z ring septums. Rapidly oscillates between the poles of the cell to destabilize FtsZ filaments that have formed before they mature into polar Z rings. Prevents FtsZ polymerization. In Aliivibrio fischeri (strain ATCC 700601 / ES114) (Vibrio fischeri), this protein is Probable septum site-determining protein MinC.